The chain runs to 299 residues: GTPase Era (299 aa).

In terms of domain architecture, Era-type G spans 4–171; the sequence is KSGFVAILGR…VDILSENLGE (168 aa). The interval 12 to 19 is G1; the sequence is GRPNVGKS. A GTP-binding site is contributed by 12–19; the sequence is GRPNVGKS. Residues 38-42 form a G2 region; the sequence is QTTRN. The tract at residues 59 to 62 is G3; the sequence is DTPG. GTP-binding positions include 59 to 63 and 121 to 124; these read DTPGI and NKID. The G4 stretch occupies residues 121-124; that stretch reads NKID. The interval 150–152 is G5; sequence ISA. The region spanning 202-280 is the KH type-2 domain; the sequence is TREEIPHSVA…FLETWVKVKK (79 aa).

Belongs to the TRAFAC class TrmE-Era-EngA-EngB-Septin-like GTPase superfamily. Era GTPase family. In terms of assembly, monomer.

It is found in the cytoplasm. It localises to the cell membrane. An essential GTPase that binds both GDP and GTP, with rapid nucleotide exchange. Plays a role in 16S rRNA processing and 30S ribosomal subunit biogenesis and possibly also in cell cycle regulation and energy metabolism. The sequence is that of GTPase Era from Streptococcus pneumoniae (strain JJA).